The primary structure comprises 342 residues: MAHVAEWKKKEVEELAKLIKSYPVIALVDVSSMPAYPLSQMRRLIRENGGLLRVSRNTLIELAIKKAAKELGKPELEKLVEYIDRGAGILVTNMNPFKLYKFLQQNRQPAPAKPGAVVPKDVVVPAGPTPLAPGPIVGQMQALGIPARIEKGKVTIQKDTTVLKAGEVITPELANILNALGIQPLEVGLDVLAVYEDGIVYTPDVLAIDEQEYIDMLQKAYMHAFNLAVNIAYPTPETIEAIIQKAFLNAKTVAIEAGYITKETIQDIIGRAFRAMLLLAQQLPEDVLDEKTKELLSAQAQVAVATQPSEEEKKEEEKTEEEEKEEEASEEEALAGLSALFG.

Positions 212-342 (EYIDMLQKAY…ALAGLSALFG (131 aa)) are required for interaction with ribosomal protein L12 dimers. The span at 299 to 308 (QAQVAVATQP) shows a compositional bias: polar residues. A disordered region spans residues 299-342 (QAQVAVATQPSEEEKKEEEKTEEEEKEEEASEEEALAGLSALFG). A compositionally biased stretch (acidic residues) spans 318–333 (KTEEEEKEEEASEEEA).

Belongs to the universal ribosomal protein uL10 family. In terms of assembly, part of the 50S ribosomal subunit, binds large rRNA. Forms the ribosomal stalk which helps the ribosome interact with GTP-bound translation factors. Forms a heptameric L10(L12)2(L12)2(L12)2 complex, where L10 forms an elongated spine to which the L12 dimers bind in a sequential fashion.

Functionally, forms the large subunit's ribosomal stalk, playing a central role in the interaction of the ribosome with elongation factors; the stalk complex of P.horikoshii binds to E.coli large subunits and confers on them the ability to interact with eukaryotic elongation factors. Each succesive L12 dimer bound along the P0 spine increases the GTPase activity of elongation factors and increases translation by reconsituted ribosomes, although the first site is the most stimulatory. This Pyrococcus horikoshii (strain ATCC 700860 / DSM 12428 / JCM 9974 / NBRC 100139 / OT-3) protein is Large ribosomal subunit protein uL10.